The sequence spans 395 residues: Putative pyridoxal phosphate-dependent acyltransferase (395 aa).

Pyridoxal 5'-phosphate is bound at residue 110–111; the sequence is GF. A substrate-binding site is contributed by histidine 135. Pyridoxal 5'-phosphate contacts are provided by residues serine 185, 210–213, and 240–243; these read DDAH and TLSK. N6-(pyridoxal phosphate)lysine is present on lysine 243. Threonine 357 is a binding site for substrate.

This sequence belongs to the class-II pyridoxal-phosphate-dependent aminotransferase family. As to quaternary structure, homodimer. The cofactor is pyridoxal 5'-phosphate.

The chain is Putative pyridoxal phosphate-dependent acyltransferase from Staphylococcus aureus (strain MRSA252).